We begin with the raw amino-acid sequence, 960 residues long: Dynamin-like GTPase OPA1, mitochondrial (960 aa).

The transit peptide at 1–87 directs the protein to the mitochondrion; sequence MWRLRRAAVA…IKYGYQPRRN (87 aa). Residues 88 to 96 are Mitochondrial matrix-facing; sequence FWPARLATR. A helical membrane pass occupies residues 97–113; the sequence is LLKLRYLILGSAVGGGY. Topologically, residues 114–770 are mitochondrial intermembrane; it reads TAKKTFDQWK…NAIENMVGPD (657 aa). The stretch at 210-254 forms a coiled coil; the sequence is SDKEKIDQLQEELLHTQLKYQRILERLEKENKELRKLVLQKDDKG. Position 228 is an N6-acetyllysine (K228). One can recognise a Dynamin-type G domain in the interval 285 to 561; it reads QDHLPRVVVV…FWKMVRESVE (277 aa). The tract at residues 295 to 302 is G1 motif; the sequence is GDQSAGKT. 6 residues coordinate GTP: S298, G300, K301, T302, S303, and G317. A Mg(2+)-binding site is contributed by T302. The segment at 321-324 is G2 motif; that stretch reads MMTR. 2 residues coordinate Mg(2+): T323 and D398. Residues 398–401 are G3 motif; the sequence is DLPG. The segment at 467–470 is G4 motif; it reads TKVD. Residues K468, D470, and T503 each contribute to the GTP site. Residues 501 to 504 are G5 motif; the sequence is VVTG. 2 stalk region regions span residues 589–836 and 874–928; these read DRNE…IKDT and CNDV…IKLL. The tract at residues 736-856 is paddle region; it reads SDKQQWDAAI…KTALNHCNLC (121 aa). The stretch at 771-781 is an intramembrane region; sequence WKKRWLYWKNR. At 782–960 the chain is on the mitochondrial intermembrane side; the sequence is TQEQCVHNET…AFIEALHQEK (179 aa). A disulfide bridge links C856 with C874. Residues 895 to 960 adopt a coiled-coil conformation; that stretch reads RQQLTNTEVR…AFIEALHQEK (66 aa).

The protein belongs to the TRAFAC class dynamin-like GTPase superfamily. Dynamin/Fzo/YdjA family. Oligomeric complex consisting of membrane-bound and soluble forms of OPA1. Interacts with RCC1L; RCC1L acts as a guanine nucleotide exchange factor (GEF) for OPA1 by exchanging bound GDP for free GTP. Interacts with CHCHD3 and IMMT; these interactions occur preferentially with soluble OPA1 forms. Interacts with PRELID1. Cleaved by OMA1 or YME1L downstream of the transmembrane region in response to different signals to generate soluble forms. Cleaved by OMA1 at position S1 following stress conditions, generating the short soluble form (Dynamin-like GTPase OPA1, short form; S-OPA1). AFG3L2 is involved in the regulation of OMA1-dependent processing of OPA1. PARL-dependent proteolytic processing releases an antiapoptotic soluble form not required for mitochondrial fusion.

Its subcellular location is the mitochondrion inner membrane. The protein localises to the mitochondrion intermembrane space. The catalysed reaction is GTP + H2O = GDP + phosphate + H(+). Its activity is regulated as follows. Activated by guanine nucleotide exchange factor RCC1L. In terms of biological role, dynamin-related GTPase that is essential for normal mitochondrial morphology by mediating fusion of the mitochondrial inner membranes, regulating cristae morphology and maintaining respiratory chain function. Exists in two forms: the transmembrane, long form (Dynamin-like GTPase OPA1, long form; L-OPA1), which is tethered to the inner mitochondrial membrane, and the short soluble form (Dynamin-like GTPase OPA1, short form; S-OPA1), which results from proteolytic cleavage and localizes in the intermembrane space. Both forms (L-OPA1 and S-OPA1) cooperate to catalyze the fusion of the mitochondrial inner membrane. The equilibrium between L-OPA1 and S-OPA1 is essential: excess levels of S-OPA1, produced by cleavage by OMA1 following loss of mitochondrial membrane potential, lead to an impaired equilibrium between L-OPA1 and S-OPA1, inhibiting mitochondrial fusion. The balance between L-OPA1 and S-OPA1 also influences cristae shape and morphology. Involved in remodeling cristae and the release of cytochrome c during apoptosis. Proteolytic processing by PARL in response to intrinsic apoptotic signals may lead to disassembly of OPA1 oligomers and release of the caspase activator cytochrome C (CYCS) into the mitochondrial intermembrane space. Acts as a regulator of T-helper Th17 cells, which are characterized by cells with fused mitochondria with tight cristae, by mediating mitochondrial membrane remodeling: OPA1 is required for interleukin-17 (IL-17) production. Its role in mitochondrial morphology is required for mitochondrial genome maintenance. Functionally, constitutes the transmembrane long form (L-OPA1) that plays a central role in mitochondrial inner membrane fusion and cristae morphology. L-OPA1 and the soluble short form (S-OPA1) form higher-order helical assemblies that coordinate the fusion of mitochondrial inner membranes. Inner membrane-anchored L-OPA1 molecules initiate membrane remodeling by recruiting soluble S-OPA1 to rapidly polymerize into a flexible cylindrical scaffold encaging the mitochondrial inner membrane. Once at the membrane surface, the formation of S-OPA1 helices induce bilayer curvature. OPA1 dimerization through the paddle region, which inserts into cardiolipin-containing membrane, promotes GTP hydrolysis and the helical assembly of a flexible OPA1 lattice on the membrane, which drives membrane curvature and mitochondrial fusion. Plays a role in the maintenance and remodeling of mitochondrial cristae, some invaginations of the mitochondrial inner membrane that provide an increase in the surface area. Probably acts by forming helical filaments at the inside of inner membrane tubes with the shape and dimensions of crista junctions. The equilibrium between L-OPA1 and S-OPA1 influences cristae shape and morphology: increased L-OPA1 levels promote cristae stacking and elongated mitochondria, while increased S-OPA1 levels correlated with irregular cristae packing and round mitochondria shape. Its function is as follows. Constitutes the soluble short form (S-OPA1) generated by cleavage by OMA1, which plays a central role in mitochondrial inner membrane fusion and cristae morphology. The transmembrane long form (L-OPA1) and the S-OPA1 form higher-order helical assemblies that coordinate the fusion of mitochondrial inner membranes. Inner membrane-anchored L-OPA1 molecules initiate membrane remodeling by recruiting soluble S-OPA1 to rapidly polymerize into a flexible cylindrical scaffold encaging the mitochondrial inner membrane. Once at the membrane surface, the formation of S-OPA1 helices induce bilayer curvature. OPA1 dimerization through the paddle region, which inserts into cardiolipin-containing membrane, promotes GTP hydrolysis and the helical assembly of a flexible OPA1 lattice on the membrane, which drives membrane curvature and mitochondrial fusion. Excess levels of S-OPA1 produced by cleavage by OMA1 following stress conditions that induce loss of mitochondrial membrane potential, lead to an impaired equilibrium between L-OPA1 and S-OPA1, thereby inhibiting mitochondrial fusion. Involved in mitochondrial safeguard in response to transient mitochondrial membrane depolarization by mediating flickering: cleavage by OMA1 leads to excess production of S-OPA1, preventing mitochondrial hyperfusion. Plays a role in the maintenance and remodeling of mitochondrial cristae, some invaginations of the mitochondrial inner membrane that provide an increase in the surface area. Probably acts by forming helical filaments at the inside of inner membrane tubes with the shape and dimensions of crista junctions. The equilibrium between L-OPA1 and S-OPA1 influences cristae shape and morphology: increased L-OPA1 levels promote cristae stacking and elongated mitochondria, while increased S-OPA1 levels correlated with irregular cristae packing and round mitochondria shape. In Pongo abelii (Sumatran orangutan), this protein is Dynamin-like GTPase OPA1, mitochondrial.